The following is a 500-amino-acid chain: Metacaspase-5 (500 aa).

The N-terminal stretch at 1-18 (MDAALALLFGQVATAVLP) is a signal peptide. Positions 19 to 63 (YVVNSIGRVPRPKRVDVKKAMGEAHQCRPVVPYRAPRPYTEGRVK) are important for catalytic activity. Asn70 and Asn113 each carry an N-linked (GlcNAc...) asparagine glycan. Residue His147 is part of the active site. 3 residues coordinate Ca(2+): Asp162, Asp178, and Asp179. Cys202 is a catalytic residue. Asp209 is a binding site for Ca(2+). Asn219, Asn235, Asn258, Asn264, Asn283, and Asn332 each carry an N-linked (GlcNAc...) asparagine glycan. Disordered regions lie at residues 358-419 (EATL…QAYY) and 444-500 (QPPQ…PGRK). Residues 379–389 (ASTSNGKSNPG) are compositionally biased toward polar residues. Over residues 444 to 461 (QPPQQAYYQPPQQAYYQP) the composition is skewed to low complexity.

This sequence belongs to the peptidase C14B family.

It is found in the recycling endosome. In terms of biological role, cysteine protease that cleaves specifically after arginine or lysine residues. This Trypanosoma brucei brucei protein is Metacaspase-5.